Here is a 467-residue protein sequence, read N- to C-terminus: Trigger factor (467 aa).

Residues 162–243 (GDFVSIDLSA…LNSVKERHLP (82 aa)) enclose the PPIase FKBP-type domain. A compositionally biased stretch (acidic residues) spans 426-435 (EEGNELDLDE). Positions 426-467 (EEGNELDLDELFGTQAGEEQGEQAEGTEATDEQSAKADAKAE) are disordered. The span at 436–452 (LFGTQAGEEQGEQAEGT) shows a compositional bias: low complexity. The segment covering 458–467 (QSAKADAKAE) has biased composition (basic and acidic residues).

This sequence belongs to the FKBP-type PPIase family. Tig subfamily.

The protein localises to the cytoplasm. The catalysed reaction is [protein]-peptidylproline (omega=180) = [protein]-peptidylproline (omega=0). Its function is as follows. Involved in protein export. Acts as a chaperone by maintaining the newly synthesized protein in an open conformation. Functions as a peptidyl-prolyl cis-trans isomerase. This chain is Trigger factor, found in Saccharopolyspora erythraea (strain ATCC 11635 / DSM 40517 / JCM 4748 / NBRC 13426 / NCIMB 8594 / NRRL 2338).